A 314-amino-acid chain; its full sequence is Methionyl-tRNA formyltransferase (314 aa).

112–115 (SLLP) serves as a coordination point for (6S)-5,6,7,8-tetrahydrofolate.

Belongs to the Fmt family.

It catalyses the reaction L-methionyl-tRNA(fMet) + (6R)-10-formyltetrahydrofolate = N-formyl-L-methionyl-tRNA(fMet) + (6S)-5,6,7,8-tetrahydrofolate + H(+). In terms of biological role, attaches a formyl group to the free amino group of methionyl-tRNA(fMet). The formyl group appears to play a dual role in the initiator identity of N-formylmethionyl-tRNA by promoting its recognition by IF2 and preventing the misappropriation of this tRNA by the elongation apparatus. The chain is Methionyl-tRNA formyltransferase from Legionella pneumophila subsp. pneumophila (strain Philadelphia 1 / ATCC 33152 / DSM 7513).